The primary structure comprises 536 residues: Arylsulfatase (536 aa).

Residues Asp13, Asp14, and Cys51 each contribute to the Ca(2+) site. The active-site Nucleophile is Cys51. Cys51 bears the 3-oxoalanine (Cys) mark. Residue His115 is part of the active site. 2 residues coordinate Ca(2+): Asp317 and Asn318.

This sequence belongs to the sulfatase family. In terms of assembly, monomer. Ca(2+) serves as cofactor. The conversion to 3-oxoalanine (also known as C-formylglycine, FGly), of a serine or cysteine residue in prokaryotes and of a cysteine residue in eukaryotes, is critical for catalytic activity.

Its subcellular location is the cytoplasm. The enzyme catalyses an aryl sulfate + H2O = a phenol + sulfate + H(+). Hydrolyzes the bond between sulfate and the aromatic ring in a compound such as 4-nitrocatechol sulfate. This Pseudomonas aeruginosa (strain ATCC 15692 / DSM 22644 / CIP 104116 / JCM 14847 / LMG 12228 / 1C / PRS 101 / PAO1) protein is Arylsulfatase (atsA).